A 102-amino-acid chain; its full sequence is RNA-binding protein Hfq (102 aa).

Positions 9–68 constitute a Sm domain; the sequence is DPFLNALRRERVPVSIYLVNGIKLQGQIESFDQFVILLKNTVSQMVYKHAISTVVPSRPV. The disordered stretch occupies residues 63-102; that stretch reads VPSRPVSHHSNNAGGGTSSNYHHGSSPQNTSAQQDSEETE. Residues 70–96 show a composition bias toward polar residues; the sequence is HHSNNAGGGTSSNYHHGSSPQNTSAQQ.

The protein belongs to the Hfq family. In terms of assembly, homohexamer.

Functionally, RNA chaperone that binds small regulatory RNA (sRNAs) and mRNAs to facilitate mRNA translational regulation in response to envelope stress, environmental stress and changes in metabolite concentrations. Also binds with high specificity to tRNAs. The protein is RNA-binding protein Hfq of Shigella dysenteriae serotype 1 (strain Sd197).